The chain runs to 284 residues: Homeobox-leucine zipper protein HAT4 (284 aa).

The span at 48-59 (ESFTSSVPNSDS) shows a compositional bias: polar residues. Residues 48 to 132 (ESFTSSVPNS…DGDNSRKKLR (85 aa)) form a disordered region. Over residues 89–100 (VSSPNSTVSSST) the composition is skewed to low complexity. The homeobox DNA-binding region spans 126–185 (NSRKKLRLSKDQSAILEETFKDHSTLNPKQKQALAKQLGLRARQVEVWFQNRRARTKLKQ). A leucine-zipper region spans residues 193-214 (LRRCCENLTEENRRLQKEVTEL).

The protein belongs to the HD-ZIP homeobox family. Class II subfamily. As to quaternary structure, interacts with DNA as homodimer. As to expression, predominantly expressed in leaves and stems.

It localises to the nucleus. In terms of biological role, probable transcription factor involved in the negative regulation of cell elongation and specific cell proliferation processes such as lateral root formation and secondary growth of the vascular system. Acts as a mediator of the red/far-red light effects on leaf cell expansion in the shading response. Binds to the DNA sequence 5'-CAAT[GC]ATTG-3'. Negatively regulates its own expression. The chain is Homeobox-leucine zipper protein HAT4 (HAT4) from Arabidopsis thaliana (Mouse-ear cress).